The sequence spans 156 residues: ATP synthase subunit b (156 aa).

A helical membrane pass occupies residues 7–27; it reads LFAQMVVFLILAWFTMKFVWP.

It belongs to the ATPase B chain family. As to quaternary structure, F-type ATPases have 2 components, F(1) - the catalytic core - and F(0) - the membrane proton channel. F(1) has five subunits: alpha(3), beta(3), gamma(1), delta(1), epsilon(1). F(0) has three main subunits: a(1), b(2) and c(10-14). The alpha and beta chains form an alternating ring which encloses part of the gamma chain. F(1) is attached to F(0) by a central stalk formed by the gamma and epsilon chains, while a peripheral stalk is formed by the delta and b chains.

The protein localises to the cell inner membrane. In terms of biological role, f(1)F(0) ATP synthase produces ATP from ADP in the presence of a proton or sodium gradient. F-type ATPases consist of two structural domains, F(1) containing the extramembraneous catalytic core and F(0) containing the membrane proton channel, linked together by a central stalk and a peripheral stalk. During catalysis, ATP synthesis in the catalytic domain of F(1) is coupled via a rotary mechanism of the central stalk subunits to proton translocation. Functionally, component of the F(0) channel, it forms part of the peripheral stalk, linking F(1) to F(0). This is ATP synthase subunit b from Paraburkholderia xenovorans (strain LB400).